A 27-amino-acid polypeptide reads, in one-letter code: Phospholipase A2 P-elapitoxin-Aa1a alpha chain (27 aa).

It belongs to the phospholipase A2 family. Group I subfamily. In terms of assembly, heterotrimer of alpha, beta and gamma chains, each related to PLA2. Ca(2+) serves as cofactor. As to expression, expressed by the venom gland.

The protein resides in the secreted. It catalyses the reaction a 1,2-diacyl-sn-glycero-3-phosphocholine + H2O = a 1-acyl-sn-glycero-3-phosphocholine + a fatty acid + H(+). Its function is as follows. Heterotrimer: presynaptic neurotoxin. Inhibits nerve-evoked twitch contractions but not responses to cholinergic agonists acetylcholine and carbachol and to depolarizing agonist KCl. Causes a fade in tetanic contractions. Displays a triphasic mode of action with depression, enhancement and blockade of neurotransmission. Does not display myotoxic activity such as changes in baseline muscle tension or inhibition of directly stimulated muscle twitches. All subunits are necessary for maximum toxicity. Monomer: Snake venom phospholipase A2 (PLA2) alpha chain that has enzymatic activity. PLA2 catalyzes the calcium-dependent hydrolysis of the 2-acyl groups in 3-sn-phosphoglycerides. The polypeptide is Phospholipase A2 P-elapitoxin-Aa1a alpha chain (Acanthophis antarcticus (Common death adder)).